Here is a 379-residue protein sequence, read N- to C-terminus: PqqA peptide cyclase (379 aa).

The 213-residue stretch at 8 to 220 (LPAPIGLLAE…IRVVEEARER (213 aa)) folds into the Radical SAM core domain. Positions 22, 26, and 29 each coordinate [4Fe-4S] cluster.

The protein belongs to the radical SAM superfamily. PqqE family. Interacts with PqqD. The interaction is necessary for activity of PqqE. It depends on [4Fe-4S] cluster as a cofactor.

It catalyses the reaction [PQQ precursor protein] + S-adenosyl-L-methionine = E-Y cross-linked-[PQQ precursor protein] + 5'-deoxyadenosine + L-methionine + H(+). Its pathway is cofactor biosynthesis; pyrroloquinoline quinone biosynthesis. Catalyzes the cross-linking of a glutamate residue and a tyrosine residue in the PqqA protein as part of the biosynthesis of pyrroloquinoline quinone (PQQ). The sequence is that of PqqA peptide cyclase from Methylobacterium sp. (strain 4-46).